A 310-amino-acid chain; its full sequence is Aspartate carbamoyltransferase catalytic subunit (310 aa).

Arginine 58 and threonine 59 together coordinate carbamoyl phosphate. Lysine 86 serves as a coordination point for L-aspartate. Positions 108, 136, and 139 each coordinate carbamoyl phosphate. Residues arginine 169 and arginine 224 each contribute to the L-aspartate site. Residues glycine 265 and proline 266 each coordinate carbamoyl phosphate.

It belongs to the aspartate/ornithine carbamoyltransferase superfamily. ATCase family. Heterododecamer (2C3:3R2) of six catalytic PyrB chains organized as two trimers (C3), and six regulatory PyrI chains organized as three dimers (R2).

The enzyme catalyses carbamoyl phosphate + L-aspartate = N-carbamoyl-L-aspartate + phosphate + H(+). It participates in pyrimidine metabolism; UMP biosynthesis via de novo pathway; (S)-dihydroorotate from bicarbonate: step 2/3. In terms of biological role, catalyzes the condensation of carbamoyl phosphate and aspartate to form carbamoyl aspartate and inorganic phosphate, the committed step in the de novo pyrimidine nucleotide biosynthesis pathway. In Citrifermentans bemidjiense (strain ATCC BAA-1014 / DSM 16622 / JCM 12645 / Bem) (Geobacter bemidjiensis), this protein is Aspartate carbamoyltransferase catalytic subunit.